We begin with the raw amino-acid sequence, 284 residues long: Tropomyosin (284 aa).

Residues 1–284 (MEAIKKKMQA…DQTFAELTGY (284 aa)) are a coiled coil.

This sequence belongs to the tropomyosin family. As to quaternary structure, homodimer.

In terms of biological role, tropomyosin, in association with the troponin complex, plays a central role in the calcium dependent regulation of muscle contraction. This chain is Tropomyosin, found in Dermatophagoides farinae (American house dust mite).